The chain runs to 522 residues: Cell polarity protein mod5 (522 aa).

Disordered stretches follow at residues 1 to 83 (MSAL…PDGD), 119 to 158 (KRSASKSPKRSANGSTSEDISIEGSPSETAKGARSSFNSN), 170 to 192 (RRILEASQDSSRPGRYSYRTKSA), 251 to 285 (PLQPYSPPANETPASSSSSAKARPVSVPDMSSPVP), and 300 to 516 (YSPS…KLEK). Polar residues-rich tracts occupy residues 27–46 (PNTTVGFQFDNRNVGTSAPS), 66–76 (LPSSKQDTGSS), and 131–146 (NGSTSEDISIEGSPSE). Serine 43 is modified (phosphoserine). The segment covering 258–285 (PANETPASSSSSAKARPVSVPDMSSPVP) has biased composition (low complexity). Phosphoserine is present on serine 303. Residues 308-318 (KVAETDSESRK) show a composition bias toward basic and acidic residues. The span at 335-349 (GAQTQSTPNRISRSD) shows a compositional bias: polar residues. At serine 350 the chain carries Phosphoserine. Composition is skewed to polar residues over residues 363 to 396 (NASTASSEAISQSMRSFQPQPNTGSPFPRFTSTN) and 404 to 431 (DIPQSDANDSTVNLNQPNYANLTPTPQV). Residues 439–452 (SRSSPLPSASVPAL) are compositionally biased toward low complexity. Composition is skewed to basic and acidic residues over residues 472 to 482 (HESEMPPHVTR) and 495 to 516 (PKEKPSEKSEKPPKKKGSKLEK).

Interacts with tea1 and tea3.

It is found in the cell membrane. With tea1, acts in a positive-feedback loop in the microtubule-mediated regulation of cell polarity. Involved in the anchoring of tea1 at the cortex as well as the correct localization of tea3. This Schizosaccharomyces pombe (strain 972 / ATCC 24843) (Fission yeast) protein is Cell polarity protein mod5 (mod5).